A 108-amino-acid chain; its full sequence is MSTVYETLYILRPDLTDEQVELAIAKYQNLLQEQGATDLEVQNRGKRRLAYEIKKQRDGFYVQFNYNAPGKAIAILERAMRLSEEVIRYLTVKQEVTKEKEDKVAVTA.

This sequence belongs to the bacterial ribosomal protein bS6 family.

Binds together with bS18 to 16S ribosomal RNA. This Nostoc sp. (strain PCC 7120 / SAG 25.82 / UTEX 2576) protein is Small ribosomal subunit protein bS6.